The chain runs to 515 residues: Tabersonine 6,7-epoxidase isoform 2 (515 aa).

The chain crosses the membrane as a helical span at residues 1–21 (MEFVVSPFAFLIFFFILLKMI). N-linked (GlcNAc...) asparagine glycosylation is found at Asn173, Asn259, and Asn352. Cys449 contributes to the heme binding site.

The protein belongs to the cytochrome P450 family. Requires heme as cofactor. Mainly expressed in aerial organs, including stems, leaves and flowers.

The protein localises to the endoplasmic reticulum membrane. The catalysed reaction is (-)-tabersonine + reduced [NADPH--hemoprotein reductase] + O2 = lochnericine + oxidized [NADPH--hemoprotein reductase] + H2O + H(+). Its pathway is alkaloid biosynthesis. In terms of biological role, component of the monoterpenoid indole alkaloids (MIAs, e.g. echitovenine, tabersonine, lochnericine, 19-hydroxytabersonine and horhammericine) biosynthetic pathway; MIAs are used in cancer treatment and other medical applications. Cytochrome P450 catalyzing the conversion of tabersonine to lochnericine. The protein is Tabersonine 6,7-epoxidase isoform 2 of Catharanthus roseus (Madagascar periwinkle).